A 157-amino-acid chain; its full sequence is 6,7-dimethyl-8-ribityllumazine synthase (157 aa).

5-amino-6-(D-ribitylamino)uracil is bound by residues phenylalanine 25, 59–61 (AME), and 83–85 (AII). Residue 88-89 (ST) participates in (2S)-2-hydroxy-3-oxobutyl phosphate binding. Histidine 91 functions as the Proton donor in the catalytic mechanism. Phenylalanine 116 is a 5-amino-6-(D-ribitylamino)uracil binding site. Position 130 (arginine 130) interacts with (2S)-2-hydroxy-3-oxobutyl phosphate.

It belongs to the DMRL synthase family.

The catalysed reaction is (2S)-2-hydroxy-3-oxobutyl phosphate + 5-amino-6-(D-ribitylamino)uracil = 6,7-dimethyl-8-(1-D-ribityl)lumazine + phosphate + 2 H2O + H(+). Its pathway is cofactor biosynthesis; riboflavin biosynthesis; riboflavin from 2-hydroxy-3-oxobutyl phosphate and 5-amino-6-(D-ribitylamino)uracil: step 1/2. Its function is as follows. Catalyzes the formation of 6,7-dimethyl-8-ribityllumazine by condensation of 5-amino-6-(D-ribitylamino)uracil with 3,4-dihydroxy-2-butanone 4-phosphate. This is the penultimate step in the biosynthesis of riboflavin. The chain is 6,7-dimethyl-8-ribityllumazine synthase from Lawsonia intracellularis (strain PHE/MN1-00).